The primary structure comprises 107 residues: Phosphoribosyl-ATP pyrophosphatase (107 aa).

Belongs to the PRA-PH family.

Its subcellular location is the cytoplasm. It catalyses the reaction 1-(5-phospho-beta-D-ribosyl)-ATP + H2O = 1-(5-phospho-beta-D-ribosyl)-5'-AMP + diphosphate + H(+). It functions in the pathway amino-acid biosynthesis; L-histidine biosynthesis; L-histidine from 5-phospho-alpha-D-ribose 1-diphosphate: step 2/9. In Neisseria gonorrhoeae (strain ATCC 700825 / FA 1090), this protein is Phosphoribosyl-ATP pyrophosphatase.